Here is a 101-residue protein sequence, read N- to C-terminus: Acylphosphatase (101 aa).

Residues 12-98 form the Acylphosphatase-like domain; the sequence is RAHVFVTGRV…EGLRGFEVKR (87 aa). Active-site residues include arginine 27 and asparagine 45.

This sequence belongs to the acylphosphatase family.

It carries out the reaction an acyl phosphate + H2O = a carboxylate + phosphate + H(+). The chain is Acylphosphatase (acyP) from Nostoc sp. (strain PCC 7120 / SAG 25.82 / UTEX 2576).